Here is a 95-residue protein sequence, read N- to C-terminus: Small ribosomal subunit protein bS20c (95 aa).

The protein belongs to the bacterial ribosomal protein bS20 family.

The protein localises to the plastid. It is found in the chloroplast. Binds directly to 16S ribosomal RNA. This is Small ribosomal subunit protein bS20c from Pyropia yezoensis (Susabi-nori).